A 161-amino-acid chain; its full sequence is Nucleotide-binding protein BTH_I0730 (161 aa).

It belongs to the YajQ family.

Nucleotide-binding protein. This chain is Nucleotide-binding protein BTH_I0730, found in Burkholderia thailandensis (strain ATCC 700388 / DSM 13276 / CCUG 48851 / CIP 106301 / E264).